A 327-amino-acid polypeptide reads, in one-letter code: Tyrosine--tRNA ligase (327 aa).

Tyrosine 33 serves as a coordination point for L-tyrosine. The 'HIGH' region signature appears at 38-46; it reads PSGVLHLGH. The L-tyrosine site is built by tyrosine 154, glutamine 158, aspartate 161, and glutamine 176. Positions 212 to 216 match the 'KMSKS' region motif; that stretch reads KMSSS. Position 215 (serine 215) interacts with ATP.

Belongs to the class-I aminoacyl-tRNA synthetase family. TyrS type 3 subfamily. Homodimer.

The protein resides in the cytoplasm. The catalysed reaction is tRNA(Tyr) + L-tyrosine + ATP = L-tyrosyl-tRNA(Tyr) + AMP + diphosphate + H(+). Catalyzes the attachment of tyrosine to tRNA(Tyr) in a two-step reaction: tyrosine is first activated by ATP to form Tyr-AMP and then transferred to the acceptor end of tRNA(Tyr). The chain is Tyrosine--tRNA ligase from Halobacterium salinarum (strain ATCC 29341 / DSM 671 / R1).